A 516-amino-acid polypeptide reads, in one-letter code: Multicopper oxidase CueO (516 aa).

The tat-type signal signal peptide spans 1 to 28; sequence MQRRDFLKYSVALGVASALPLWSRAVFA. Plastocyanin-like domains follow at residues 55–165 and 227–292; these read GQST…IEDD and PRGW…DNKP. Cu cation is bound by residues His-101, His-103, His-141, and His-143. Positions 355–400 are methionine-rich region; it reads MDPMLDMMGMQMLMEKYGDQAMAGMDHSQMMGHMGHGNMNHMNHGG. Residues 402 to 516 form the Plastocyanin-like 3 domain; the sequence is FDFHHANKIN…DTGMMLGFTV (115 aa). Cu cation is bound by residues His-443, His-446, His-448, His-499, Cys-500, His-501, and His-505.

This sequence belongs to the multicopper oxidase family. As to quaternary structure, monomer. The cofactor is Cu cation. Post-translationally, exported by the Tat system. The position of the signal peptide cleavage has been experimentally proven.

The protein resides in the periplasm. The catalysed reaction is 4 Cu(+) + O2 + 4 H(+) = 4 Cu(2+) + 2 H2O. Its activity is regulated as follows. Ferroxidase and phenoloxidase activities are enhanced considerably in the presence of excess copper ions. A labile regulatory copper ion near the T1 copper site is important for the copper associated activation of enzyme activity. Ag(+) acts as a potent inhibitor of oxidase activity by binding at Cu(+) binding sites, blocking Cu(+) substrate binding and oxidation. pPD oxidase activity is strongly inhibited by sodium azide, an inhibitor of the electron transfer. Functionally, multicopper oxidase involved in copper homeostasis and copper tolerance under aerobic conditions. Is responsible for the oxidation of Cu(+) to the less harmful Cu(2+) in the periplasm, thereby preventing Cu(+) from entering the cytoplasm. Probably primarily functions as a cuprous oxidase in vivo. Its function is as follows. In vitro, in the presence of excess copper ions, exhibits ferroxidase and phenoloxidase activities. Fe(2+) is an excellent substrate in the presence of excess Cu(2+), but is inactive in the absence of Cu(2+). Oxidizes the phenolate iron siderophores enterobactin, 2,3-dihydroxybenzoate (2,3-DHB) and 3-hydroxyanthranilate (3-HAA). Oxidation and thus inactivation of enterobactin could protect cells from the interaction of enterobactin with copper and play a central role as an interface between copper detoxification and iron homeostasis. Also oxidizes a variety of phenolic model substrates, including 2,2'-azinobis(3-ethylbenzthiazolinesulfonic acid) (ABTS), p-phenylenediamine (pPD), 2,6-dimethoxyphenol (2,6-DMP) and 3,4-dihydroxybenzoic acid (3,4-DHB). The sequence is that of Multicopper oxidase CueO from Escherichia coli (strain K12).